The primary structure comprises 585 residues: Arginine--tRNA ligase (585 aa).

The 'HIGH' region signature appears at 131-141 (ANPTGPMHVGH).

The protein belongs to the class-I aminoacyl-tRNA synthetase family. As to quaternary structure, monomer.

The protein resides in the cytoplasm. It carries out the reaction tRNA(Arg) + L-arginine + ATP = L-arginyl-tRNA(Arg) + AMP + diphosphate. The polypeptide is Arginine--tRNA ligase (Bartonella henselae (strain ATCC 49882 / DSM 28221 / CCUG 30454 / Houston 1) (Rochalimaea henselae)).